We begin with the raw amino-acid sequence, 100 residues long: Urease subunit gamma (100 aa).

It belongs to the urease gamma subunit family. Heterotrimer of UreA (gamma), UreB (beta) and UreC (alpha) subunits. Three heterotrimers associate to form the active enzyme.

The protein resides in the cytoplasm. The catalysed reaction is urea + 2 H2O + H(+) = hydrogencarbonate + 2 NH4(+). The protein operates within nitrogen metabolism; urea degradation; CO(2) and NH(3) from urea (urease route): step 1/1. The polypeptide is Urease subunit gamma (Clostridium perfringens).